We begin with the raw amino-acid sequence, 1315 residues long: Tetratricopeptide repeat protein 21B (1315 aa).

TPR repeat units lie at residues 108 to 141 (RKALYHAGLFLWHIGRHDKAREYIDRMSKMPHDS), 145 to 178 (PILKAWLDITRGKEPYAKKALRYFEEGLQDGNDI), 192 to 225 (QNYSGALETVSQIIVNFPSFLPAFEKKMKLQLAL), 285 to 323 (AQLFYKITLAFSRTCGRNQLILQKVQSFLEKAFSLTPQQ), 324 to 357 (AEIATELGYQMILQGKVKEAWKWYRTAMTLNESN), 492 to 525 (PQAVFLMAKVKYLSGDTEAAYNNLQHCLEHSPSY), 563 to 596 (PLYHLIKAQSQKKMGEVAEAIKTLHMAMNLPGMR), 616 to 649 (LSIFLELVEVHRLNGEQHEAAKVLQDAIHEFSGT), 721 to 754 (PRSFLLLGDAYMNIQEPEEAIVAYEQALNQNPKD), 756 to 788 (TLARKIGKALVKTHNYSKAITYYEAALKSGQQN), 790 to 821 (LCYDLAELLLRLKLYEKAEKVLQHSLAHEPVS), 830 to 863 (GRSQVLLAKVYSKMERPSDAIAALQQARELQARI), 883 to 916 (AEICAEIAKHSAAQRDYEKAITFYREALVHCETD), 918 to 950 (KIMLELAQLYLAQEDLDASLRHCALLLQRDQDN), 951 to 984 (EPATMLMADLMFRKQDYEQAVYHLQQLLDRKPDN), 1022 to 1055 (PGFQYCKGLHFWYTGEPNDALRHFNKARKDSDWG), 1196 to 1229 (EKSWLLLADIYIQSAKYDMAEELLKRCLCHNRSC), 1231 to 1263 (KAYEYMGYIMEKEQAYTDAAFNYEMAWKHSNQT), and 1265 to 1298 (PAVGYKLAFNYLKAKRYVDAIDVCHQVLEAHPTY).

This sequence belongs to the TTC21 family. In terms of assembly, component of the IFT complex A (IFT-A) complex. IFT-A complex is divided into a core subcomplex composed of IFT122:IFT140:WDR19 which is associated with TULP3 and a peripheral subcomplex composed of IFT43:WDR35:TTC21B. Interacts directy with WDR35 and TTC21B. Interacts with TTC25.

The protein resides in the cytoplasm. It localises to the cytoskeleton. Its subcellular location is the cilium axoneme. Functionally, component of the IFT complex A (IFT-A), a complex required for retrograde ciliary transport and entry into cilia of G protein-coupled receptors (GPCRs). Essential for retrograde trafficking of IFT-1, IFT-B and GPCRs. Negatively modulates the SHH signal transduction. This is Tetratricopeptide repeat protein 21B (Ttc21b) from Mus musculus (Mouse).